Consider the following 617-residue polypeptide: ATP-dependent RNA helicase DBP1 (617 aa).

Residues 1–90 form a disordered region; the sequence is MADLPQKVSN…TSANYNRGGS (90 aa). Residues 7 to 17 show a composition bias toward polar residues; sequence KVSNLSINNKE. Residues 38 to 58 show a composition bias toward basic and acidic residues; it reads PSFERSTPKQEDKVTGGDFFR. Residues 79-90 show a composition bias toward polar residues; it reads GGTSANYNRGGS. Residues 154–182 carry the Q motif motif; it reads LDFSSPPLDELLMENIKLASFTKPTPVQK. Residues 185 to 374 enclose the Helicase ATP-binding domain; that stretch reads IPIVTKGRDL…RDFLDNYIFL (190 aa). 198 to 205 is an ATP binding site; it reads AQTGSGKT. The DEAD box motif lies at 318–321; the sequence is DEAD. The region spanning 385-545 is the Helicase C-terminal domain; that stretch reads NITQRILYVD…EVPTFLSDLS (161 aa). The segment at 542 to 617 is disordered; it reads SDLSRQNSRG…GYGNSNASWW (76 aa). A compositionally biased stretch (polar residues) spans 580-594; the sequence is FGSTRPRNTGTSNWG.

The protein belongs to the DEAD box helicase family. DDX3/DED1 subfamily.

The protein localises to the cytoplasm. The enzyme catalyses ATP + H2O = ADP + phosphate + H(+). ATP-binding RNA helicase involved in translation initiation. Remodels RNA in response to ADP and ATP concentrations by facilitating disruption, but also formation of RNA duplexes. Redundant to DED1, may be required in conditions in which DED1 expression is decreased. The protein is ATP-dependent RNA helicase DBP1 (DBP1) of Saccharomyces cerevisiae (strain YJM789) (Baker's yeast).